A 358-amino-acid chain; its full sequence is Protein-glutamate methylesterase/protein-glutamine glutaminase 2 (358 aa).

The Response regulatory domain occupies 7–124; sequence SVLLVDDSAV…KNFLIESAAE (118 aa). 4-aspartylphosphate is present on D58. A CheB-type methylesterase domain is found at 170 to 358; it reads AQTTERIVAI…QEIHQAILHR (189 aa). Residues S182, H208, and D304 contribute to the active site.

It belongs to the CheB family. In terms of processing, phosphorylated by CheA. Phosphorylation of the N-terminal regulatory domain activates the methylesterase activity.

The protein resides in the cytoplasm. The catalysed reaction is [protein]-L-glutamate 5-O-methyl ester + H2O = L-glutamyl-[protein] + methanol + H(+). It catalyses the reaction L-glutaminyl-[protein] + H2O = L-glutamyl-[protein] + NH4(+). Involved in chemotaxis. Part of a chemotaxis signal transduction system that modulates chemotaxis in response to various stimuli. Catalyzes the demethylation of specific methylglutamate residues introduced into the chemoreceptors (methyl-accepting chemotaxis proteins or MCP) by CheR. Also mediates the irreversible deamidation of specific glutamine residues to glutamic acid. This is Protein-glutamate methylesterase/protein-glutamine glutaminase 2 from Pseudomonas syringae pv. tomato (strain ATCC BAA-871 / DC3000).